A 470-amino-acid polypeptide reads, in one-letter code: FAD-dependent monooxygenase dpchE (470 aa).

The N-terminal stretch at 1–24 (MSEPHFKVIIVGGSITGLTLAHSL) is a signal peptide. The FAD site is built by Glu-35, Gly-49, and Arg-108. N-linked (GlcNAc...) asparagine glycosylation is present at Asn-128. The active site involves Arg-193. Asp-312 and Ala-325 together coordinate FAD. Residues 447 to 463 (WAVVSRSVLLLVGLAIL) form a helical membrane-spanning segment.

Belongs to the paxM FAD-dependent monooxygenase family. Requires FAD as cofactor.

Its subcellular location is the membrane. It functions in the pathway secondary metabolite biosynthesis; terpenoid biosynthesis. FAD-dependent monooxygenase; part of the gene cluster that mediates the biosynthesis of the diterpenoid pyrones higginsianins A and B. The first step of the pathway is the synthesis of the alpha-pyrone moiety by the polyketide synthase dpchA via condensation of one acetyl-CoA starter unit with 3 malonyl-CoA units and 2 methylations. The alpha-pyrone is then combined with geranylgeranyl pyrophosphate (GGPP) formed by the GGPP synthase dpchD through the action of the prenyltransferase dpchC to yield a linear alpha-pyrone diterpenoid. Subsequent steps in the diterpenoid pyrone biosynthetic pathway involve the decalin core formation, which is initiated by the epoxidation of the C10-C11 olefin by the FAD-dependent oxidoreductase dpchE, and is followed by a cyclization cascade catalyzed by the terpene cyclase dpchB. The short chain dehydrogenase/reductase dpchG then oxidizes the 8S hydroxy group to a ketone and the short chain dehydrogenase/reductase dpchH reduces the ketone to the 8R hydroxy group to yield higginsianin B. Finally, the FAD-dependent oxidoreductase dpchF converts higginsianin B into higginsianin A. This chain is FAD-dependent monooxygenase dpchE, found in Colletotrichum higginsianum (strain IMI 349063) (Crucifer anthracnose fungus).